A 985-amino-acid chain; its full sequence is Cation channel sperm-associated auxiliary subunit epsilon (985 aa).

An N-terminal signal peptide occupies residues 1–35 (MPSAGQRKPGSLLALQALQKWLLRGGVGAMLARQV). The Extracellular segment spans residues 36–937 (VAALLLWLSC…ESLGMIPRSS (902 aa)). Intrachain disulfides connect cysteine 87-cysteine 101, cysteine 130-cysteine 235, cysteine 275-cysteine 365, and cysteine 439-cysteine 442. N-linked (GlcNAc...) asparagine glycosylation is found at asparagine 91, asparagine 143, and asparagine 292. N-linked (GlcNAc...) asparagine glycans are attached at residues asparagine 502, asparagine 517, and asparagine 565. 4 disulfide bridges follow: cysteine 617-cysteine 724, cysteine 737-cysteine 919, cysteine 753-cysteine 786, and cysteine 838-cysteine 869. Asparagine 749 is a glycosylation site (N-linked (GlcNAc...) asparagine). Residue asparagine 830 is glycosylated (N-linked (GlcNAc...) asparagine). Residues asparagine 888, asparagine 915, and asparagine 920 are each glycosylated (N-linked (GlcNAc...) asparagine). The helical transmembrane segment at 938-958 (VYLVAALIFVLMLTFISILVL) threads the bilayer. The Cytoplasmic portion of the chain corresponds to 959–985 (SYFWYLKIYRQFIIEPLHKRPAKQKKN).

It belongs to the CATSPERD family. In terms of assembly, component of the CatSper complex or CatSpermasome composed of the core pore-forming members CATSPER1, CATSPER2, CATSPER3 and CATSPER4 as well as auxiliary members CATSPERB, CATSPERG2, CATSPERD, CATSPERE, CATSPERZ, C2CD6/CATSPERT, SLCO6C1, TMEM249, TMEM262 and EFCAB9. HSPA1 may be an additional auxiliary complex member. The core complex members CATSPER1, CATSPER2, CATSPER3 and CATSPER4 form a heterotetrameric channel. The auxiliary CATSPERB, CATSPERG2, CATSPERD and CATSPERE subunits form a pavilion-like structure over the pore which stabilizes the complex through interactions with CATSPER4, CATSPER3, CATSPER1 and CATSPER2 respectively. SLCO6C1 interacts with CATSPERE and TMEM262/CATSPERH interacts with CATSPERB, further stabilizing the complex. C2CD6/CATSPERT interacts at least with CATSPERD and is required for targeting the CatSper complex in the flagellar membrane. Testis-specific.

It localises to the cell projection. The protein resides in the cilium. The protein localises to the flagellum membrane. Its function is as follows. Auxiliary component of the CatSper complex, a complex involved in sperm cell hyperactivation. Sperm cell hyperactivation is needed for sperm motility which is essential late in the preparation of sperm for fertilization. This chain is Cation channel sperm-associated auxiliary subunit epsilon, found in Mus musculus (Mouse).